A 113-amino-acid polypeptide reads, in one-letter code: Putative membrane protein insertion efficiency factor (113 aa).

This sequence belongs to the UPF0161 family.

It is found in the cell inner membrane. Functionally, could be involved in insertion of integral membrane proteins into the membrane. The chain is Putative membrane protein insertion efficiency factor from Campylobacter jejuni subsp. jejuni serotype O:2 (strain ATCC 700819 / NCTC 11168).